Here is a 267-residue protein sequence, read N- to C-terminus: 4-hydroxy-tetrahydrodipicolinate reductase (267 aa).

11-16 contacts NAD(+); sequence GAAGRM. An NADP(+)-binding site is contributed by Arg39. NAD(+) is bound by residues 100–102 and 126–129; these read GTT and APNF. His156 serves as the catalytic Proton donor/acceptor. His157 is a binding site for (S)-2,3,4,5-tetrahydrodipicolinate. Lys160 acts as the Proton donor in catalysis. 166 to 167 contributes to the (S)-2,3,4,5-tetrahydrodipicolinate binding site; sequence GT.

The protein belongs to the DapB family.

It is found in the cytoplasm. The enzyme catalyses (S)-2,3,4,5-tetrahydrodipicolinate + NAD(+) + H2O = (2S,4S)-4-hydroxy-2,3,4,5-tetrahydrodipicolinate + NADH + H(+). It catalyses the reaction (S)-2,3,4,5-tetrahydrodipicolinate + NADP(+) + H2O = (2S,4S)-4-hydroxy-2,3,4,5-tetrahydrodipicolinate + NADPH + H(+). The protein operates within amino-acid biosynthesis; L-lysine biosynthesis via DAP pathway; (S)-tetrahydrodipicolinate from L-aspartate: step 4/4. In terms of biological role, catalyzes the conversion of 4-hydroxy-tetrahydrodipicolinate (HTPA) to tetrahydrodipicolinate. The sequence is that of 4-hydroxy-tetrahydrodipicolinate reductase from Moorella thermoacetica (strain ATCC 39073 / JCM 9320).